A 281-amino-acid polypeptide reads, in one-letter code: Shikimate dehydrogenase (NADP(+)) (281 aa).

Shikimate-binding positions include 14–16 (SRS) and Thr-61. The active-site Proton acceptor is Lys-65. 2 residues coordinate shikimate: Asn-86 and Asp-101. NADP(+) is bound by residues 127 to 131 (GAGGA), 151 to 156 (NRTLAR), and Val-216. Residue Tyr-218 participates in shikimate binding. Gly-239 contacts NADP(+).

The protein belongs to the shikimate dehydrogenase family. Homodimer.

It carries out the reaction shikimate + NADP(+) = 3-dehydroshikimate + NADPH + H(+). It participates in metabolic intermediate biosynthesis; chorismate biosynthesis; chorismate from D-erythrose 4-phosphate and phosphoenolpyruvate: step 4/7. In terms of biological role, involved in the biosynthesis of the chorismate, which leads to the biosynthesis of aromatic amino acids. Catalyzes the reversible NADPH linked reduction of 3-dehydroshikimate (DHSA) to yield shikimate (SA). The polypeptide is Shikimate dehydrogenase (NADP(+)) (Azorhizobium caulinodans (strain ATCC 43989 / DSM 5975 / JCM 20966 / LMG 6465 / NBRC 14845 / NCIMB 13405 / ORS 571)).